The following is a 629-amino-acid chain: tRNA uridine 5-carboxymethylaminomethyl modification enzyme MnmG (629 aa).

FAD is bound by residues 13–18, Val125, and Ser180; that span reads GGGHAG. Residue 273–287 coordinates NAD(+); it reads GPRYCPSIEDKVMRF. Gln370 is a binding site for FAD.

It belongs to the MnmG family. Homodimer. Heterotetramer of two MnmE and two MnmG subunits. The cofactor is FAD.

It is found in the cytoplasm. In terms of biological role, NAD-binding protein involved in the addition of a carboxymethylaminomethyl (cmnm) group at the wobble position (U34) of certain tRNAs, forming tRNA-cmnm(5)s(2)U34. The chain is tRNA uridine 5-carboxymethylaminomethyl modification enzyme MnmG from Shigella flexneri serotype 5b (strain 8401).